The following is a 164-amino-acid chain: MKSVITTVISAADAAGRFPTASDLESVQGNIQRASARLEAAEKLAGNYEAVVKEAGDACFAKYAYLKNAGEAGDSQEKINKCYRDVDHYMRLINYCLVVGGTGPVDEWGIAGAREVYRTLNLPTASYVAAFAFARNRLCCPRDMSAQAGVEYAAYLDYVINALS.

C82 and C139 together coordinate (2R,3E)-phycoerythrobilin.

Belongs to the phycobiliprotein family. Heteromer of 6 alpha, 6 beta and one gamma chain. In terms of processing, contains two covalently linked bilin chromophores.

It localises to the plastid. The protein localises to the chloroplast thylakoid membrane. Functionally, light-harvesting photosynthetic bile pigment-protein from the phycobiliprotein complex. The sequence is that of B-phycoerythrin alpha chain (cpeA) from Rhodella violacea (Red alga).